A 336-amino-acid chain; its full sequence is Fructose-1,6-bisphosphatase class 1 (336 aa).

The Mg(2+) site is built by Glu90, Asp112, Leu114, and Asp115. Substrate contacts are provided by residues 115–118 (DGSS), Asn211, and Lys277. Residue Glu283 coordinates Mg(2+).

This sequence belongs to the FBPase class 1 family. In terms of assembly, homotetramer. The cofactor is Mg(2+).

The protein localises to the cytoplasm. It carries out the reaction beta-D-fructose 1,6-bisphosphate + H2O = beta-D-fructose 6-phosphate + phosphate. It functions in the pathway carbohydrate biosynthesis; gluconeogenesis. The polypeptide is Fructose-1,6-bisphosphatase class 1 (Pseudomonas paraeruginosa (strain DSM 24068 / PA7) (Pseudomonas aeruginosa (strain PA7))).